Here is a 124-residue protein sequence, read N- to C-terminus: Transcription initiation factor TFIID subunit 13 (124 aa).

Over residues 1 to 16 the composition is skewed to acidic residues; sequence MADEEEDPTFEEENEE. The interval 1–28 is disordered; the sequence is MADEEEDPTFEEENEEIGGGAEGGQGKR. The 43-residue stretch at 32 to 74 folds into the Histone-fold domain; that stretch reads FSKELRCMMYGFGDDQNPYTESVDILEDLVIEFITEMTHKAMS.

It belongs to the TAF13 family. In terms of assembly, component of the TFIID basal transcription factor complex, composed of TATA-box-binding protein TBP, and a number of TBP-associated factors (TAFs), including TAF1, TAF2, TAF3, TAF4, TAF5, TAF6, TAF7, TAF8, TAF9, TAF10, TAF11, TAF12 and TAF13. Interacts with TBP, and more strongly with TAF10 and TAF11.

The protein localises to the nucleus. In terms of biological role, the TFIID basal transcription factor complex plays a major role in the initiation of RNA polymerase II (Pol II)-dependent transcription. TFIID recognizes and binds promoters via its subunit TBP, a TATA-box-binding protein, and promotes assembly of the pre-initiation complex (PIC). The TFIID complex consists of TBP and TBP-associated factors (TAFs), including TAF1, TAF2, TAF3, TAF4, TAF5, TAF6, TAF7, TAF8, TAF9, TAF10, TAF11, TAF12 and TAF13. TAF13, together with TAF11 and TBP, play key roles during promoter binding by the TFIID and TFIIA transcription factor complexes. The protein is Transcription initiation factor TFIID subunit 13 of Bos taurus (Bovine).